Here is a 64-residue protein sequence, read N- to C-terminus: Micrurotoxin 1 (64 aa).

Intrachain disulfides connect Cys3–Cys24, Cys6–Cys11, Cys17–Cys41, Cys45–Cys57, and Cys58–Cys63.

This sequence belongs to the three-finger toxin family. Ancestral subfamily. In terms of tissue distribution, expressed by the venom gland.

Its subcellular location is the secreted. In terms of biological role, allosteric modulator of the GABA(A) receptor (GABR), possibly increasing receptor affinity for the agonist, thus enhancing receptor opening and macroscopic desensitization. In vivo, intracerebroventricular injection into mice results in periods of reduced basal activity, followed by bursts of intense seizures and death. The protein is Micrurotoxin 1 of Micrurus mipartitus (Red-tailed coral snake).